The sequence spans 302 residues: N-acetylaspartate synthetase (302 aa).

Pro residues predominate over residues 46-60 (PGPAAAPPAPPPAPV). Residues 46-72 (PGPAAAPPAPPPAPVAQPHGGAGGAGP) form a disordered region. The helical transmembrane segment at 121-141 (YALLAALCFAVSRSLLLTCLV) threads the bilayer. The N-acetyltransferase domain occupies 143 to 283 (AALLGLRYYY…VLPGMTLSLA (141 aa)).

The protein belongs to the NAT8 family. In terms of tissue distribution, expressed in brain.

It is found in the cytoplasm. It localises to the microsome membrane. Its subcellular location is the mitochondrion membrane. The protein localises to the endoplasmic reticulum membrane. The catalysed reaction is L-aspartate + acetyl-CoA = N-acetyl-L-aspartate + CoA + H(+). Aminooxyacetic acid (AOAA) blocks its activity in both cytoplasm and mitochondria. Its function is as follows. Catalyzes the synthesis of N-acetylaspartate acid (NAA) from L-aspartate and acetyl-CoA. Promotes dopamine uptake by regulating TNF-alpha expression. Attenuates methamphetamine-induced inhibition of dopamine uptake. The protein is N-acetylaspartate synthetase of Homo sapiens (Human).